A 93-amino-acid chain; its full sequence is Integration host factor subunit beta (93 aa).

It belongs to the bacterial histone-like protein family. As to quaternary structure, heterodimer of an alpha and a beta chain.

In terms of biological role, this protein is one of the two subunits of integration host factor, a specific DNA-binding protein that functions in genetic recombination as well as in transcriptional and translational control. This chain is Integration host factor subunit beta, found in Aliivibrio salmonicida (strain LFI1238) (Vibrio salmonicida (strain LFI1238)).